Consider the following 425-residue polypeptide: Serine--tRNA ligase (425 aa).

Residue 233–235 (TAE) coordinates L-serine. 264–266 (RAE) lines the ATP pocket. L-serine is bound at residue glutamate 287. 351–354 (EISS) serves as a coordination point for ATP. Serine 387 serves as a coordination point for L-serine.

The protein belongs to the class-II aminoacyl-tRNA synthetase family. Type-1 seryl-tRNA synthetase subfamily. As to quaternary structure, homodimer. The tRNA molecule binds across the dimer.

It is found in the cytoplasm. It catalyses the reaction tRNA(Ser) + L-serine + ATP = L-seryl-tRNA(Ser) + AMP + diphosphate + H(+). The enzyme catalyses tRNA(Sec) + L-serine + ATP = L-seryl-tRNA(Sec) + AMP + diphosphate + H(+). It functions in the pathway aminoacyl-tRNA biosynthesis; selenocysteinyl-tRNA(Sec) biosynthesis; L-seryl-tRNA(Sec) from L-serine and tRNA(Sec): step 1/1. Its function is as follows. Catalyzes the attachment of serine to tRNA(Ser). Is also able to aminoacylate tRNA(Sec) with serine, to form the misacylated tRNA L-seryl-tRNA(Sec), which will be further converted into selenocysteinyl-tRNA(Sec). The polypeptide is Serine--tRNA ligase (Clostridium botulinum (strain Eklund 17B / Type B)).